The following is a 94-amino-acid chain: Scorpine (94 aa).

Residues 1–19 (MNSKLTALIFLGLIAIAYC) form the signal peptide. Positions 55-94 (EFQCMANMDMLGNCEKHCQTSGEKGYCHGTKCKCGTPLSY) constitute a BetaSPN-type CS-alpha/beta domain. 3 disulfides stabilise this stretch: cysteine 58/cysteine 81, cysteine 68/cysteine 86, and cysteine 72/cysteine 88.

It belongs to the long chain scorpion toxin family. Class 3 subfamily. Expressed by the venom gland.

It localises to the secreted. The protein resides in the target cell membrane. In terms of biological role, this full-length protein shows antibacterial activity against B.subtilis and K.pneumoniae. Also shows a potent inhibitory effect on the ookinete (ED(50) 0.7 uM) and gamete (ED(50) 10 uM) stages of Plasmodium berghei development. In addition, induces cell membrane disruption, leakage currents and cell death on HEK293 cell line (tested at 25 uM). The polypeptide is Scorpine (Pandinus imperator (Emperor scorpion)).